Consider the following 168-residue polypeptide: Crossover junction endodeoxyribonuclease RuvC (168 aa).

Residues Asp7, Glu64, and Asp136 contribute to the active site. Positions 7, 64, and 136 each coordinate Mg(2+).

It belongs to the RuvC family. Homodimer which binds Holliday junction (HJ) DNA. The HJ becomes 2-fold symmetrical on binding to RuvC with unstacked arms; it has a different conformation from HJ DNA in complex with RuvA. In the full resolvosome a probable DNA-RuvA(4)-RuvB(12)-RuvC(2) complex forms which resolves the HJ. Mg(2+) is required as a cofactor.

It is found in the cytoplasm. It carries out the reaction Endonucleolytic cleavage at a junction such as a reciprocal single-stranded crossover between two homologous DNA duplexes (Holliday junction).. Functionally, the RuvA-RuvB-RuvC complex processes Holliday junction (HJ) DNA during genetic recombination and DNA repair. Endonuclease that resolves HJ intermediates. Cleaves cruciform DNA by making single-stranded nicks across the HJ at symmetrical positions within the homologous arms, yielding a 5'-phosphate and a 3'-hydroxyl group; requires a central core of homology in the junction. The consensus cleavage sequence is 5'-(A/T)TT(C/G)-3'. Cleavage occurs on the 3'-side of the TT dinucleotide at the point of strand exchange. HJ branch migration catalyzed by RuvA-RuvB allows RuvC to scan DNA until it finds its consensus sequence, where it cleaves and resolves the cruciform DNA. The chain is Crossover junction endodeoxyribonuclease RuvC from Polynucleobacter necessarius subsp. necessarius (strain STIR1).